Here is a 661-residue protein sequence, read N- to C-terminus: MQTHRAPERPSGADKLEIAVNAYSKTPLLDTIRTPDDLRKLKIEQVRQVADELRQETIDAVSVTGGHFGAGLGVVELTTAIHYVFDTPRDRLIWDVGHQAYPHKILTGRRDRIRTLRTGGGLSGFTKRSESDYDPFGAAHSSTSISAGLGMAVARDLSGGKNNVIAVIGDGAMSAGMAYEAMNNAGAMNSRLIVILNDNDMSIAPPVGAMSAYLSRLYSGKTYRTLREAAKQINKRLPKIIANRANRVEEYSRGFMMDGGTLFEELGFYYVGPIDGHNLDHLLPVLKNVRDMEEGPILVHVVTQKGKGYGPAEASADKYHAVVKFDVATGTQAKAKPNAPAYQNVFGQSLVKEAQKDEKIVAITAAMPSGTGVDIFNKAFPDRTFDVGIAEQHAVTFAAGLASEGYKPFCAIYSTFLQRGYDQIVHDVAIQNLPVRFAIDRAGLVGADGATHAGSFDNAYLGCLPNMVIMAAADEAELVHMVATQVAIDDRPSSLRYPRGEGRGIEMPEVGIPLEIGKGRMIRQGSKIALLSFGTRLAECEKAADELAAHGLSTTIADARFMKPLDTELVLKLARDHEILITIEEGSVGGFGSHVAQFLTDQGALDSGMVKFRTMVLPDVFQDHDTPAAMYARAGLDAKGIVAKVFEALGKDVKTETVKLA.

Residues His98 and 139-141 (AHS) contribute to the thiamine diphosphate site. Mg(2+) is bound at residue Asp170. Thiamine diphosphate contacts are provided by residues 171–172 (GA), Asn199, Tyr309, and Glu391. Asn199 lines the Mg(2+) pocket.

This sequence belongs to the transketolase family. DXPS subfamily. As to quaternary structure, homodimer. Requires Mg(2+) as cofactor. The cofactor is thiamine diphosphate.

The enzyme catalyses D-glyceraldehyde 3-phosphate + pyruvate + H(+) = 1-deoxy-D-xylulose 5-phosphate + CO2. It functions in the pathway metabolic intermediate biosynthesis; 1-deoxy-D-xylulose 5-phosphate biosynthesis; 1-deoxy-D-xylulose 5-phosphate from D-glyceraldehyde 3-phosphate and pyruvate: step 1/1. In terms of biological role, catalyzes the acyloin condensation reaction between C atoms 2 and 3 of pyruvate and glyceraldehyde 3-phosphate to yield 1-deoxy-D-xylulose-5-phosphate (DXP). The polypeptide is 1-deoxy-D-xylulose-5-phosphate synthase (Bradyrhizobium diazoefficiens (strain JCM 10833 / BCRC 13528 / IAM 13628 / NBRC 14792 / USDA 110)).